The following is a 180-amino-acid chain: Secreted RxLR effector protein 5 (180 aa).

An N-terminal signal peptide occupies residues 1 to 24; it reads MRFYYTLLATAAALLVHSDALSAA. The RxLR-dEER signature appears at 44 to 60; it reads RFLRRHTDSETTDNEER.

Belongs to the RxLR effector family.

It localises to the secreted. It is found in the host cell. Its function is as follows. Secreted effector that partially suppresses elicitor-induced cell death in host and enhances virulence of P.parasitica. The protein is Secreted RxLR effector protein 5 of Phytophthora nicotianae (Potato buckeye rot agent).